The sequence spans 132 residues: Phosphoribosyl-AMP cyclohydrolase (132 aa).

Residue D89 participates in Mg(2+) binding. Residue C90 participates in Zn(2+) binding. Residues D91 and D93 each coordinate Mg(2+). Zn(2+) is bound by residues C106 and C113.

Belongs to the PRA-CH family. As to quaternary structure, homodimer. It depends on Mg(2+) as a cofactor. Zn(2+) is required as a cofactor.

The protein localises to the cytoplasm. The catalysed reaction is 1-(5-phospho-beta-D-ribosyl)-5'-AMP + H2O = 1-(5-phospho-beta-D-ribosyl)-5-[(5-phospho-beta-D-ribosylamino)methylideneamino]imidazole-4-carboxamide. Its pathway is amino-acid biosynthesis; L-histidine biosynthesis; L-histidine from 5-phospho-alpha-D-ribose 1-diphosphate: step 3/9. Functionally, catalyzes the hydrolysis of the adenine ring of phosphoribosyl-AMP. This Renibacterium salmoninarum (strain ATCC 33209 / DSM 20767 / JCM 11484 / NBRC 15589 / NCIMB 2235) protein is Phosphoribosyl-AMP cyclohydrolase.